The sequence spans 218 residues: Eukaryotic translation initiation factor 3 subunit K (218 aa).

N-acetylalanine is present on Ala2. Position 28 is a phosphothreonine (Thr28). The PCI domain maps to 42–204 (YDLEANLAVL…SIKPKNIVEK (163 aa)). Ser217 is modified (phosphoserine).

Component of the eukaryotic translation initiation factor 3 (eIF-3) complex, which is composed of 13 subunits: EIF3A, EIF3B, EIF3C, EIF3D, EIF3E, EIF3F, EIF3G, EIF3H, EIF3I, EIF3J, EIF3K, EIF3L and EIF3M. The eIF-3 complex appears to include 3 stable modules: module A is composed of EIF3A, EIF3B, EIF3G and EIF3I; module B is composed of EIF3F, EIF3H, and EIF3M; and module C is composed of EIF3C, EIF3D, EIF3E, EIF3K and EIF3L. EIF3C of module C binds EIF3B of module A and EIF3H of module B, thereby linking the three modules. EIF3J is a labile subunit that binds to the eIF-3 complex via EIF3B. The eIF-3 complex interacts with RPS6KB1 under conditions of nutrient depletion. Mitogenic stimulation leads to binding and activation of a complex composed of MTOR and RPTOR, leading to phosphorylation and release of RPS6KB1 and binding of EIF4B to eIF-3. Interacts with CCND3, but not with CCND1 and CCND2. As to expression, ubiquitous, with the highest levels of expression in brain, testis and kidney.

The protein localises to the nucleus. The protein resides in the cytoplasm. In terms of biological role, component of the eukaryotic translation initiation factor 3 (eIF-3) complex, which is required for several steps in the initiation of protein synthesis. The eIF-3 complex associates with the 40S ribosome and facilitates the recruitment of eIF-1, eIF-1A, eIF-2:GTP:methionyl-tRNAi and eIF-5 to form the 43S pre-initiation complex (43S PIC). The eIF-3 complex stimulates mRNA recruitment to the 43S PIC and scanning of the mRNA for AUG recognition. The eIF-3 complex is also required for disassembly and recycling of post-termination ribosomal complexes and subsequently prevents premature joining of the 40S and 60S ribosomal subunits prior to initiation. The eIF-3 complex specifically targets and initiates translation of a subset of mRNAs involved in cell proliferation, including cell cycling, differentiation and apoptosis, and uses different modes of RNA stem-loop binding to exert either translational activation or repression. The chain is Eukaryotic translation initiation factor 3 subunit K from Homo sapiens (Human).